A 90-amino-acid polypeptide reads, in one-letter code: Small ribosomal subunit protein bS16 (90 aa).

This sequence belongs to the bacterial ribosomal protein bS16 family.

The protein is Small ribosomal subunit protein bS16 of Streptococcus equi subsp. zooepidemicus (strain H70).